Consider the following 442-residue polypeptide: Ribosomal protein uS12 methylthiotransferase RimO (442 aa).

The region spanning 13–129 is the MTTase N-terminal domain; the sequence is RSIFLLSLGC…ILNILGTAYD (117 aa). Positions 22, 58, 92, 153, 157, and 160 each coordinate [4Fe-4S] cluster. Residues 139–369 form the Radical SAM core domain; it reads LSPSHYAWLK…MELQEGISEK (231 aa). The 68-residue stretch at 372 to 439 folds into the TRAM domain; it reads RALEEKALKV…AYELVGRIKN (68 aa).

The protein belongs to the methylthiotransferase family. RimO subfamily. [4Fe-4S] cluster is required as a cofactor.

The protein localises to the cytoplasm. The enzyme catalyses L-aspartate(89)-[ribosomal protein uS12]-hydrogen + (sulfur carrier)-SH + AH2 + 2 S-adenosyl-L-methionine = 3-methylsulfanyl-L-aspartate(89)-[ribosomal protein uS12]-hydrogen + (sulfur carrier)-H + 5'-deoxyadenosine + L-methionine + A + S-adenosyl-L-homocysteine + 2 H(+). Catalyzes the methylthiolation of an aspartic acid residue of ribosomal protein uS12. The sequence is that of Ribosomal protein uS12 methylthiotransferase RimO from Chlorobium phaeobacteroides (strain BS1).